We begin with the raw amino-acid sequence, 224 residues long: Uridylate kinase (224 aa).

Position 6–10 (6–10 (KVTGK)) interacts with ATP. Glycine 41 contacts UMP. Positions 42 and 46 each coordinate ATP. Residues aspartate 63 and 111–117 (FQPGQST) contribute to the UMP site. Threonine 137, phenylalanine 143, and aspartate 146 together coordinate ATP.

Belongs to the UMP kinase family. As to quaternary structure, homohexamer.

The protein resides in the cytoplasm. It catalyses the reaction UMP + ATP = UDP + ADP. It functions in the pathway pyrimidine metabolism; CTP biosynthesis via de novo pathway; UDP from UMP (UMPK route): step 1/1. Its activity is regulated as follows. Inhibited by UTP. Catalyzes the reversible phosphorylation of UMP to UDP. This is Uridylate kinase from Metallosphaera sedula (strain ATCC 51363 / DSM 5348 / JCM 9185 / NBRC 15509 / TH2).